We begin with the raw amino-acid sequence, 96 residues long: Co-chaperonin GroES (96 aa).

The protein belongs to the GroES chaperonin family. As to quaternary structure, heptamer of 7 subunits arranged in a ring. Interacts with the chaperonin GroEL.

The protein resides in the cytoplasm. Functionally, together with the chaperonin GroEL, plays an essential role in assisting protein folding. The GroEL-GroES system forms a nano-cage that allows encapsulation of the non-native substrate proteins and provides a physical environment optimized to promote and accelerate protein folding. GroES binds to the apical surface of the GroEL ring, thereby capping the opening of the GroEL channel. This is Co-chaperonin GroES from Delftia acidovorans (strain DSM 14801 / SPH-1).